A 278-amino-acid chain; its full sequence is Transcription initiation factor TFIID subunit 9 (278 aa).

The segment at 193-278 (TTTKTVGSSG…EEEEFEFVTN (86 aa)) is disordered. Residues 200–210 (SSGGSGGGGGQ) are compositionally biased toward gly residues. The segment covering 231 to 240 (AAAVGSIAGA) has biased composition (low complexity). The segment covering 241–259 (SGSGAGSASGGGGGGGSSG) has biased composition (gly residues). The segment covering 269 to 278 (EEEEFEFVTN) has biased composition (acidic residues).

Belongs to the TAF9 family. As to quaternary structure, belongs to the TFIID complex which is composed of TATA binding protein (Tbp) and a number of TBP-associated factors (TAFs). Taf9 and Taf6 exist as a heterotetramer. Interacts with e(y)2.

The protein localises to the nucleus. Its function is as follows. TFIID is a multimeric protein complex that plays a central role in mediating promoter responses to various activators and repressors. The chain is Transcription initiation factor TFIID subunit 9 from Drosophila melanogaster (Fruit fly).